Reading from the N-terminus, the 321-residue chain is MATH domain and coiled-coil domain-containing protein At3g58260 (321 aa).

An MATH domain is found at 6–135 (NNTFTWVIKN…NDEVMVAVAV (130 aa)). Residues 232–283 (KLDWLEKKLDELFEKKKEEADKIRMQNIEEELKDLRQKCSSLEALLKKEKTG) adopt a coiled-coil conformation.

This Arabidopsis thaliana (Mouse-ear cress) protein is MATH domain and coiled-coil domain-containing protein At3g58260.